A 352-amino-acid polypeptide reads, in one-letter code: Protein-glutamate methylesterase/protein-glutamine glutaminase 2 (352 aa).

The Response regulatory domain occupies 6-124 (KVLIVEDSLV…NAGYDTMAAK (119 aa)). Aspartate 57 carries the post-translational modification 4-aspartylphosphate. One can recognise a CheB-type methylesterase domain in the interval 162-343 (PGTYSMVGIV…LPLPAIAARL (182 aa)). Catalysis depends on residues serine 173, histidine 200, and aspartate 292.

Belongs to the CheB family. In terms of processing, phosphorylated by CheA. Phosphorylation of the N-terminal regulatory domain activates the methylesterase activity.

It is found in the cytoplasm. The enzyme catalyses [protein]-L-glutamate 5-O-methyl ester + H2O = L-glutamyl-[protein] + methanol + H(+). It catalyses the reaction L-glutaminyl-[protein] + H2O = L-glutamyl-[protein] + NH4(+). Functionally, involved in chemotaxis. Part of a chemotaxis signal transduction system that modulates chemotaxis in response to various stimuli. Catalyzes the demethylation of specific methylglutamate residues introduced into the chemoreceptors (methyl-accepting chemotaxis proteins or MCP) by CheR. Also mediates the irreversible deamidation of specific glutamine residues to glutamic acid. The chain is Protein-glutamate methylesterase/protein-glutamine glutaminase 2 from Paramagnetospirillum magneticum (strain ATCC 700264 / AMB-1) (Magnetospirillum magneticum).